The sequence spans 403 residues: Alkaline protease 1 (403 aa).

An N-terminal signal peptide occupies residues 1 to 21; that stretch reads MLSIKRTLLLLGAVLPAVFGA. A propeptide spanning residues 22–125 is cleaved from the precursor; that stretch reads PVQETRRAAQ…QIWYLDALTT (104 aa). One can recognise an Inhibitor I9 domain in the interval 36-120; sequence KYIVTFKPGT…HVEEDQIWYL (85 aa). One can recognise a Peptidase S8 domain in the interval 130–403; the sequence is PWGLGSISHK…PNKLAYNGNA (274 aa). Active-site charge relay system residues include aspartate 162 and histidine 193. Residues asparagine 253 and asparagine 307 are each glycosylated (N-linked (GlcNAc...) asparagine). The active-site Charge relay system is serine 349. Residue asparagine 367 is glycosylated (N-linked (GlcNAc...) asparagine).

The protein belongs to the peptidase S8 family.

It localises to the secreted. The catalysed reaction is Hydrolysis of proteins with broad specificity, and of Bz-Arg-OEt &gt; Ac-Tyr-OEt. Does not hydrolyze peptide amides.. In terms of biological role, secreted alkaline protease that allows assimilation of proteinaceous substrates. Acts as a significant virulence factor in invasive aspergillosis. Involved in immune evasion from the human and mice complement systems during infection. Efficiently cleaves important components of the complement cascade such as such as C3, C4, C5, and C1q, as well as IgG, which leads to down-regulation of complement activation at the hyphal surface. This Aspergillus fumigatus (strain CBS 144.89 / FGSC A1163 / CEA10) (Neosartorya fumigata) protein is Alkaline protease 1 (alp1).